Here is a 204-residue protein sequence, read N- to C-terminus: Methylthioribulose-1-phosphate dehydratase (204 aa).

The Zn(2+) site is built by His96 and His98.

The protein belongs to the aldolase class II family. MtnB subfamily. Zn(2+) is required as a cofactor.

The enzyme catalyses 5-(methylsulfanyl)-D-ribulose 1-phosphate = 5-methylsulfanyl-2,3-dioxopentyl phosphate + H2O. The protein operates within amino-acid biosynthesis; L-methionine biosynthesis via salvage pathway; L-methionine from S-methyl-5-thio-alpha-D-ribose 1-phosphate: step 2/6. In terms of biological role, catalyzes the dehydration of methylthioribulose-1-phosphate (MTRu-1-P) into 2,3-diketo-5-methylthiopentyl-1-phosphate (DK-MTP-1-P). The protein is Methylthioribulose-1-phosphate dehydratase of Methylococcus capsulatus (strain ATCC 33009 / NCIMB 11132 / Bath).